The primary structure comprises 310 residues: Forkhead box protein pes-1 (310 aa).

A compositionally biased stretch (polar residues) spans 1 to 16; the sequence is MLPLSISTSPDPASQF. Disordered stretches follow at residues 1 to 37, 58 to 77, 92 to 126, and 217 to 242; these read MLPL…GTAK, VSPS…SPAP, KQSS…SNPN, and SLRR…PNPI. The span at 17-35 shows a compositional bias: low complexity; that stretch reads PTVPDLPTLTPTPSPTSGT. Residues 128–220 constitute a DNA-binding region (fork-head); that stretch reads RPAYSYNALI…IGKDCGSLRR (93 aa). Over residues 218-231 the composition is skewed to basic residues; sequence LRRKKNGKPRKYSK.

The protein resides in the nucleus. It localises to the cytoplasm. In terms of biological role, transcription factor. Plays a role in embryogenesis and later development, perhaps acting redundantly with forkhead protein fkh-2. The polypeptide is Forkhead box protein pes-1 (Caenorhabditis briggsae).